The following is a 250-amino-acid chain: 2,3-bisphosphoglycerate-dependent phosphoglycerate mutase (250 aa).

Substrate is bound by residues arginine 10 to asparagine 17, threonine 23 to glycine 24, arginine 62, glutamate 89 to tyrosine 92, lysine 100, arginine 116 to arginine 117, and glycine 185 to asparagine 186. Histidine 11 serves as the catalytic Tele-phosphohistidine intermediate. Glutamate 89 serves as the catalytic Proton donor/acceptor.

This sequence belongs to the phosphoglycerate mutase family. BPG-dependent PGAM subfamily. In terms of assembly, homodimer.

The enzyme catalyses (2R)-2-phosphoglycerate = (2R)-3-phosphoglycerate. Its pathway is carbohydrate degradation; glycolysis; pyruvate from D-glyceraldehyde 3-phosphate: step 3/5. Its function is as follows. Catalyzes the interconversion of 2-phosphoglycerate and 3-phosphoglycerate. This is 2,3-bisphosphoglycerate-dependent phosphoglycerate mutase from Shigella boydii serotype 4 (strain Sb227).